The sequence spans 501 residues: Cytochrome P450 monooxygenase ccsG (501 aa).

Positions 1-28 (MMITLFTLAVVSIGFFLWWLLTVQPAVT) are cleaved as a signal peptide. Asn115 and Asn154 each carry an N-linked (GlcNAc...) asparagine glycan. Cys443 contributes to the heme binding site.

The protein belongs to the cytochrome P450 family. Requires heme as cofactor.

It functions in the pathway mycotoxin biosynthesis. In terms of biological role, cytochrome P450 monooxygenase; part of the gene cluster that mediates the biosynthesis of a family of the mycotoxins cytochalasins E and K. The hybrid PKS-NRPS synthetase ccsA and the enoyl reductase ccsC are responsible for fusion of phenylalanine with an octaketide backbone and subsequent release of the stable tetramic acid precursor. The polyketide synthase module (PKS) of the PKS-NRPS ccsA is responsible for the synthesis of the octaketide backbone. The downstream nonribosomal peptide synthetase (NRPS) amidates the carboxyl end of the octaketide with a phenylalanine. A reductase-like domain (R) at the C-terminus catalyzes the reductive release of the polyketide-amino acid intermediate. Because ccsA lacks a designated enoylreductase (ER) domain, the required activity is provided the enoyl reductase ccsC. Upon formation of the 11-membered carbocycle-fused perhydroisoindolone intermediate, a number of oxidative steps are required to afford the final cytochalasin E and K, including two hydroxylations at C17 and C18, one alcohol oxidation at C17, one epoxidation at C6 and C7 and two Baeyer-Villiger oxidations. The oxidative modification at C17, C18 and the C6-C7 epoxidation are likely to be catalyzed by the two cytochrome P450 oxygenases ccsD and ccsG. CcsD may be responsible for the epoxidation of the C6-C7 double bond. CcsG may be responsible for the successive oxidative modifications at C17 and C18. The double Baeyer-Villiger oxidations of ketocytochalasin to precytochalasin and cytochalasin Z(16) are among the final steps leading to cytochalasin E and K and are catalyzed by ccsB. The first oxygen insertion step follows that of the classic BVMO mechanism, generating the ester precytochalasin. Release of precytochalasin into an aqueous environment can generate the shunt product iso-precytochalasin through spontaneous isomerization. Alternatively, precytochalasin can undergo further oxidation by ccsB to yield the in-line carbonate-containing cytochalasin Z(16). Cytochalasin Z(16) is a precursor to cytochalasin E and cytochalasin K, whereas iso-precytochalasin is a precursor to cytochalasin Z(17) and rosellichalasin. The hydrolyase ccsE may catalyze hydrolysis of epoxide bond in cytochalasin E to afford cytochalasin K. The function of ccsF has not been assigned but it may play a role in post-PKS-NRPS biosynthetic step, resistance or transport of cytochalasins and related PKS-NRPS products. This is Cytochrome P450 monooxygenase ccsG from Aspergillus clavatus (strain ATCC 1007 / CBS 513.65 / DSM 816 / NCTC 3887 / NRRL 1 / QM 1276 / 107).